Here is a 556-residue protein sequence, read N- to C-terminus: Glucose-6-phosphate isomerase (556 aa).

Catalysis depends on E363, which acts as the Proton donor. Residues H394 and K522 contribute to the active site.

It belongs to the GPI family.

It localises to the cytoplasm. It carries out the reaction alpha-D-glucose 6-phosphate = beta-D-fructose 6-phosphate. The protein operates within carbohydrate biosynthesis; gluconeogenesis. It participates in carbohydrate degradation; glycolysis; D-glyceraldehyde 3-phosphate and glycerone phosphate from D-glucose: step 2/4. Functionally, catalyzes the reversible isomerization of glucose-6-phosphate to fructose-6-phosphate. This Frankia casuarinae (strain DSM 45818 / CECT 9043 / HFP020203 / CcI3) protein is Glucose-6-phosphate isomerase.